The primary structure comprises 629 residues: MTLENKAEASPATKEETTTEAAPAEGEAKTESSEEKGSKEDQGDNASLYVGELDPSVTEAMLFEIFNPIGPVTSVRVCRDAITRRSLGYAYVNFHNQADGIRALEELNYSPIKERPCRIMWSQRDPALRKTGAGNIYIKNLDPAIDNKALHDTFSAFGQILSCKIATDEFGNSRGFGFVHYESAESAESAIQHVNGMLLNDKKVFVGPHVPKSDRMQSFEEQKNSFTNVFIKNLGTEITEAEFEELVNKFGETSSVHLSTNDEGKPTGFGFVDYKEHDVAVKAIDGLSETEFKGNKLFAGRAKKKYERADELRKQYEASRLEKLNKYQGVNLYIKNLDDTIDDDKLRAEFAPHGTITSAKVMVDEAGKSKGFGFVCYSSPEEATKAVTEMNHRLVAGKPLYVVLAQRKDVRRSQLQQQIQAKNQMRLQQQAAAGGLPGQYMGNPGVFYPGQPGFMPPGRGGMPFGANPQMMMRPPMPPQNQFPPRGVPGGPNMYGAPPQGYQQGGFPPQGPMRGGQPPRSGQPGPQGQFRGAPRRKDGESRVADSISNALENAPEEQHKQLVGEALYPKVLAEKAIDGNAEFAGKITGMLLEMPIKEILEVIDDEEGLQAQINDAITAYNEYLNSQKEE.

Residues 1 to 47 (MTLENKAEASPATKEETTTEAAPAEGEAKTESSEEKGSKEDQGDNAS) form a disordered region. Over residues 26–42 (GEAKTESSEEKGSKEDQ) the composition is skewed to basic and acidic residues. RRM domains are found at residues 46-124 (ASLY…WSQR), 134-211 (GNIY…PHVP), 227-304 (TNVF…RAKK), and 330-407 (VNLY…LAQR). Positions 465–543 (GANPQMMMRP…RRKDGESRVA (79 aa)) are disordered. Low complexity-rich tracts occupy residues 493–506 (MYGA…QGGF) and 514–531 (GGQP…QFRG). The PABC domain occupies 542-624 (VADSISNALE…AITAYNEYLN (83 aa)).

This sequence belongs to the polyadenylate-binding protein type-1 family.

Its subcellular location is the cytoplasm. The protein localises to the nucleus. Binds the poly(A) tail of mRNA. Appears to be an important mediator of the multiple roles of the poly(A) tail in mRNA biogenesis, stability and translation. In the nucleus, involved in both mRNA cleavage and polyadenylation. Is also required for efficient mRNA export to the cytoplasm. Acts in concert with a poly(A)-specific nuclease (PAN) to affect poly(A) tail shortening, which may occur concomitantly with either nucleocytoplasmic mRNA transport or translational initiation. In the cytoplasm, stimulates translation initiation and regulates mRNA decay through translation termination-coupled poly(A) shortening, probably mediated by PAN. This Yarrowia lipolytica (strain CLIB 122 / E 150) (Yeast) protein is Polyadenylate-binding protein, cytoplasmic and nuclear (PAB1).